We begin with the raw amino-acid sequence, 355 residues long: Blue-sensitive opsin (355 aa).

The Extracellular segment spans residues 1–41 (MKSRPQEFQEDFYIPIPLDTNNITALSPFLVPQDHLGGSGI). An N-linked (GlcNAc...) asparagine glycan is attached at asparagine 22. A helical membrane pass occupies residues 42–66 (FMIMTVFMLFLFIGGTSINVLTIVC). The Cytoplasmic segment spans residues 67–78 (TVQYKKLRSHLN). The chain crosses the membrane as a helical span at residues 79–104 (YILVNLAISNLLVSTVGSFTAFVSFL). Residues 105-118 (NRYFIFGPTACKIE) lie on the Extracellular side of the membrane. Cysteine 115 and cysteine 192 are disulfide-bonded. A helical membrane pass occupies residues 119–138 (GFVATLGGMVSLWSLSVVAF). The Cytoplasmic portion of the chain corresponds to 139–157 (ERWLVICKPVGNFSFKGTH). Residues 158 to 181 (AIIGCALTWFFALLASTPPLFGWS) traverse the membrane as a helical segment. The Extracellular portion of the chain corresponds to 182-207 (RYIPEGLQCSCGPDWYTTENKYNNES). The N-linked (GlcNAc...) asparagine glycan is linked to asparagine 205. The helical transmembrane segment at 208 to 235 (YVMFLFCFCFGFPFTVILFCYGQLLFTL) threads the bilayer. At 236–257 (KSAAKAQADSASTQKAEREVTK) the chain is on the cytoplasmic side. The helical transmembrane segment at 258–281 (MVVVMVMGFLVCWLPYASFALWVV) threads the bilayer. The Extracellular segment spans residues 282 to 289 (FNRGQSFD). Residues 290-314 (LRLGTIPSCFSKASTVYNPVIYVFM) traverse the membrane as a helical segment. Lysine 301 is modified (N6-(retinylidene)lysine). At 315-355 (NKQFRSCMMKLIFCGKSPFGDDEEASSSSQVTQVSSVGPEK) the chain is on the cytoplasmic side. The segment at 334-355 (GDDEEASSSSQVTQVSSVGPEK) is disordered. Over residues 340-355 (SSSSQVTQVSSVGPEK) the composition is skewed to low complexity.

Belongs to the G-protein coupled receptor 1 family. Opsin subfamily. In terms of processing, phosphorylated on some or all of the serine and threonine residues present in the C-terminal region. In terms of tissue distribution, the color pigments are found in the cone photoreceptor cells.

It is found in the membrane. In terms of biological role, visual pigments are the light-absorbing molecules that mediate vision. They consist of an apoprotein, opsin, covalently linked to cis-retinal. The chain is Blue-sensitive opsin (B23) from Psalidodon fasciatus (Banded astyanax).